Reading from the N-terminus, the 551-residue chain is Serendipity locus protein alpha (551 aa).

The protein resides in the cytoplasm. Its subcellular location is the cell membrane. Functionally, required for the cellularization of the syncytial blastoderm embryo. Involved in the localization of the actin filaments just prior to and during plasma membrane invagination. Sry-alpha together with nullo and bnk may provide auxiliary functions, by acting both to stabilize a large and dynamic microfilament structure and regulate its functions. The polypeptide is Serendipity locus protein alpha (Sry-alpha) (Drosophila pseudoobscura pseudoobscura (Fruit fly)).